We begin with the raw amino-acid sequence, 142 residues long: Mitochondrial import receptor subunit TOM22 homolog (142 aa).

The segment covering 1–18 (MAAAVAAAGAGEPLSPEE) has biased composition (low complexity). Positions 1 to 41 (MAAAVAAAGAGEPLSPEELLPKAEAEKAEEELEEDDDDELD) are disordered. At alanine 2 the chain carries N-acetylalanine. The Cytoplasmic segment spans residues 2-83 (AAAVAAAGAG…AQKMYRFSRA (82 aa)). Serine 15 is modified (phosphoserine). Residues 27 to 41 (KAEEELEEDDDDELD) are compositionally biased toward acidic residues. An import sequence; necessary for mitochondrion outer membrane localization and integration in the TOM complex region spans residues 41 to 50 (DETLSERLWG). Phosphothreonine is present on threonine 43. The residue at position 45 (serine 45) is a Phosphoserine. Residues 83–103 (AALWIGTTSFMILVLPVVFET) are TMD; necessary for mitochondrion outer membrane localization and integration in the TOM complex. Residues 84 to 103 (ALWIGTTSFMILVLPVVFET) traverse the membrane as a helical segment. Residues 104-142 (EKLQMEQQQQLQQRQILLGPNTGLSGGMPGALPPLPGKM) are Mitochondrial intermembrane-facing. The segment at 123–142 (PNTGLSGGMPGALPPLPGKM) is C-tail signal; necessary for mitochondrion outer membrane localization and integration in the TOM complex.

It belongs to the Tom22 family. In terms of assembly, forms part of the preprotein translocase complex of the outer mitochondrial membrane (TOM complex) which consists of at least 7 different proteins (TOMM5, TOMM6, TOMM7, TOMM20, TOMM22, TOMM40 and TOMM70). Interacts with PPP2R2B and TOMM40.

The protein localises to the mitochondrion outer membrane. In terms of biological role, central receptor component of the translocase of the outer membrane of mitochondria (TOM complex) responsible for the recognition and translocation of cytosolically synthesized mitochondrial preproteins. Together with the peripheral receptor TOM20 functions as the transit peptide receptor and facilitates the movement of preproteins into the translocation pore. Required for the translocation across the mitochondrial outer membrane of cytochrome P450 monooxygenases. This is Mitochondrial import receptor subunit TOM22 homolog (Tomm22) from Mus musculus (Mouse).